Here is a 455-residue protein sequence, read N- to C-terminus: tRNA-2-methylthio-N(6)-dimethylallyladenosine synthase (455 aa).

Positions 18-136 (KLFFIQTYGC…FPEYLNRVKT (119 aa)) constitute an MTTase N-terminal domain. [4Fe-4S] cluster-binding residues include Cys-27, Cys-63, Cys-97, Cys-173, Cys-177, and Cys-180. The 231-residue stretch at 159-389 (RKSDIKGFVT…VEIVNTGIAK (231 aa)) folds into the Radical SAM core domain. Residues 392-455 (KDAEGKIYEV…SFSLIGEVEK (64 aa)) enclose the TRAM domain.

The protein belongs to the methylthiotransferase family. MiaB subfamily. In terms of assembly, monomer. It depends on [4Fe-4S] cluster as a cofactor.

Its subcellular location is the cytoplasm. It carries out the reaction N(6)-dimethylallyladenosine(37) in tRNA + (sulfur carrier)-SH + AH2 + 2 S-adenosyl-L-methionine = 2-methylsulfanyl-N(6)-dimethylallyladenosine(37) in tRNA + (sulfur carrier)-H + 5'-deoxyadenosine + L-methionine + A + S-adenosyl-L-homocysteine + 2 H(+). Catalyzes the methylthiolation of N6-(dimethylallyl)adenosine (i(6)A), leading to the formation of 2-methylthio-N6-(dimethylallyl)adenosine (ms(2)i(6)A) at position 37 in tRNAs that read codons beginning with uridine. This is tRNA-2-methylthio-N(6)-dimethylallyladenosine synthase from Clostridium beijerinckii (strain ATCC 51743 / NCIMB 8052) (Clostridium acetobutylicum).